Consider the following 274-residue polypeptide: Nitrogenase iron protein (274 aa).

8 to 15 lines the ATP pocket; the sequence is GKGGIGKS. C94 contacts [4Fe-4S] cluster. An ADP-ribosylarginine; by dinitrogenase reductase ADP-ribosyltransferase modification is found at R97. Position 131 (C131) interacts with [4Fe-4S] cluster.

The protein belongs to the NifH/BchL/ChlL family. In terms of assembly, homodimer. [4Fe-4S] cluster is required as a cofactor. The reversible ADP-ribosylation of Arg-97 inactivates the nitrogenase reductase and regulates nitrogenase activity.

It carries out the reaction N2 + 8 reduced [2Fe-2S]-[ferredoxin] + 16 ATP + 16 H2O = H2 + 8 oxidized [2Fe-2S]-[ferredoxin] + 2 NH4(+) + 16 ADP + 16 phosphate + 6 H(+). Its function is as follows. The key enzymatic reactions in nitrogen fixation are catalyzed by the nitrogenase complex, which has 2 components: the iron protein and the molybdenum-iron protein. The protein is Nitrogenase iron protein of Chlorobium luteolum (strain DSM 273 / BCRC 81028 / 2530) (Pelodictyon luteolum).